The chain runs to 182 residues: FMN reductase (NADH) RutF (182 aa).

It belongs to the non-flavoprotein flavin reductase family. RutF subfamily.

It carries out the reaction FMNH2 + NAD(+) = FMN + NADH + 2 H(+). Functionally, catalyzes the reduction of FMN to FMNH2 which is used to reduce pyrimidine by RutA via the Rut pathway. This is FMN reductase (NADH) RutF from Yersinia enterocolitica serotype O:8 / biotype 1B (strain NCTC 13174 / 8081).